Reading from the N-terminus, the 127-residue chain is Anti-adapter protein IraD (127 aa).

Belongs to the GpW/Gp25 family. IraD subfamily. As to quaternary structure, interacts with RssB.

The protein resides in the cytoplasm. Its function is as follows. Inhibits RpoS proteolysis by regulating RssB activity, thereby increasing the stability of the sigma stress factor RpoS during oxidative stress. Its effect on RpoS stability is due to its interaction with RssB, which probably blocks the interaction of RssB with RpoS, and the consequent delivery of the RssB-RpoS complex to the ClpXP protein degradation pathway. This chain is Anti-adapter protein IraD, found in Escherichia coli O127:H6 (strain E2348/69 / EPEC).